Reading from the N-terminus, the 422-residue chain is Signal recognition particle receptor FtsY (422 aa).

Residues 39–86 (PERGVVDRSGGYTASSGITFSQTPTTQPAERIDTSGLPAVGDDATVPR) form a disordered region. Over residues 50-66 (YTASSGITFSQTPTTQP) the composition is skewed to polar residues. GTP-binding positions include 230 to 237 (GVNGTGKT), 312 to 316 (DTAGR), and 374 to 377 (TKLD).

It belongs to the GTP-binding SRP family. FtsY subfamily. Part of the signal recognition particle protein translocation system, which is composed of SRP and FtsY.

The protein resides in the cell membrane. The protein localises to the cytoplasm. The enzyme catalyses GTP + H2O = GDP + phosphate + H(+). Involved in targeting and insertion of nascent membrane proteins into the cytoplasmic membrane. Acts as a receptor for the complex formed by the signal recognition particle (SRP) and the ribosome-nascent chain (RNC). The sequence is that of Signal recognition particle receptor FtsY from Mycobacterium bovis (strain ATCC BAA-935 / AF2122/97).